Consider the following 356-residue polypeptide: GTPase HflX (356 aa).

The region spanning 180–356 (PSIGIVGYTN…KIYQLATQLS (177 aa)) is the Hflx-type G domain. Residues 186-193 (GYTNSGKT), 211-215 (FTTMS), 232-235 (DTVG), 300-303 (NKID), and 334-336 (SAL) contribute to the GTP site. 2 residues coordinate Mg(2+): Thr-193 and Thr-213.

It belongs to the TRAFAC class OBG-HflX-like GTPase superfamily. HflX GTPase family. As to quaternary structure, monomer. Associates with the 50S ribosomal subunit. Does not associate with 70S ribosomes. The cofactor is Mg(2+).

Its subcellular location is the cytoplasm. GTPase activity is stimulated by the presence of 50S ribosomal subunits. Hydrolysis is probably regulated by the HflX N-terminal domain. In terms of biological role, GTPase that associates with the 50S ribosomal subunit and may have a role during protein synthesis or ribosome biogenesis. Specific for GTP. This chain is GTPase HflX, found in Saccharolobus solfataricus (strain ATCC 35092 / DSM 1617 / JCM 11322 / P2) (Sulfolobus solfataricus).